The following is a 237-amino-acid chain: Phosphoglycolate phosphatase (237 aa).

Asp-15 serves as the catalytic Nucleophile. Positions 15, 17, and 177 each coordinate Mg(2+).

It belongs to the HAD-like hydrolase superfamily. CbbY/CbbZ/Gph/YieH family. It depends on Mg(2+) as a cofactor.

The catalysed reaction is 2-phosphoglycolate + H2O = glycolate + phosphate. It participates in organic acid metabolism; glycolate biosynthesis; glycolate from 2-phosphoglycolate: step 1/1. Functionally, specifically catalyzes the dephosphorylation of 2-phosphoglycolate. Is involved in the dissimilation of the intracellular 2-phosphoglycolate formed during the DNA repair of 3'-phosphoglycolate ends, a major class of DNA lesions induced by oxidative stress. In Caulobacter vibrioides (strain ATCC 19089 / CIP 103742 / CB 15) (Caulobacter crescentus), this protein is Phosphoglycolate phosphatase.